Reading from the N-terminus, the 375-residue chain is Tryptophan dimethylallyltransferase (375 aa).

L-tryptophan-binding positions include 83 to 84 and Glu-92; that span reads IL. Substrate-binding residues include Arg-103, Lys-189, and Tyr-191. L-tryptophan contacts are provided by Tyr-193 and Arg-246. Positions 259, 261, 263, 345, and 347 each coordinate substrate.

The protein belongs to the tryptophan dimethylallyltransferase family. As to quaternary structure, homodimer.

The enzyme catalyses L-tryptophan + dimethylallyl diphosphate = 4-(3-methylbut-2-enyl)-L-tryptophan + diphosphate. The protein operates within alkaloid biosynthesis; ergot alkaloid biosynthesis. Functionally, tryptophan dimethylallyltransferase; part of the gene cluster that mediates the biosynthesis of fungal ergot alkaloid. DmaW catalyzes the first step of ergot alkaloid biosynthesis by condensing dimethylallyl diphosphate (DMAP) and tryptophan to form 4-dimethylallyl-L-tryptophan. The second step is catalyzed by the methyltransferase easF that methylates 4-dimethylallyl-L-tryptophan in the presence of S-adenosyl-L-methionine, resulting in the formation of 4-dimethylallyl-L-abrine. The catalase easC and the FAD-dependent oxidoreductase easE then transform 4-dimethylallyl-L-abrine to chanoclavine-I which is further oxidized by easD in the presence of NAD(+), resulting in the formation of chanoclavine-I aldehyde. Chanoclavine-I aldehyde is the precursor of ergoamides and ergopeptines in Clavicipitaceae, and clavine-type alcaloids such as fumiclavine in Trichocomaceae. However, the metabolites downstream of chanoclavine-I aldehyde in Arthrodermataceae have not been identified yet. In Trichophyton verrucosum (strain HKI 0517), this protein is Tryptophan dimethylallyltransferase.